The chain runs to 668 residues: tRNA 5-methylaminomethyl-2-thiouridine biosynthesis bifunctional protein MnmC (668 aa).

A tRNA (mnm(5)s(2)U34)-methyltransferase region spans residues 1–245; sequence MKHYAIQPAN…KREMLCGVME (245 aa). The segment at 270-668 is FAD-dependent cmnm(5)s(2)U34 oxidoreductase; the sequence is IGGGIASALL…LLKGKAVKAG (399 aa).

In the N-terminal section; belongs to the methyltransferase superfamily. tRNA (mnm(5)s(2)U34)-methyltransferase family. The protein in the C-terminal section; belongs to the DAO family. Requires FAD as cofactor.

The protein resides in the cytoplasm. The enzyme catalyses 5-aminomethyl-2-thiouridine(34) in tRNA + S-adenosyl-L-methionine = 5-methylaminomethyl-2-thiouridine(34) in tRNA + S-adenosyl-L-homocysteine + H(+). Functionally, catalyzes the last two steps in the biosynthesis of 5-methylaminomethyl-2-thiouridine (mnm(5)s(2)U) at the wobble position (U34) in tRNA. Catalyzes the FAD-dependent demodification of cmnm(5)s(2)U34 to nm(5)s(2)U34, followed by the transfer of a methyl group from S-adenosyl-L-methionine to nm(5)s(2)U34, to form mnm(5)s(2)U34. The sequence is that of tRNA 5-methylaminomethyl-2-thiouridine biosynthesis bifunctional protein MnmC from Escherichia coli O139:H28 (strain E24377A / ETEC).